The chain runs to 275 residues: Large ribosomal subunit protein uL2c (275 aa).

Residues V223–L255 form a disordered region.

The protein belongs to the universal ribosomal protein uL2 family. As to quaternary structure, part of the 50S ribosomal subunit.

It localises to the plastid. The protein resides in the chloroplast. The sequence is that of Large ribosomal subunit protein uL2c (rpl2) from Pleurastrum terricola (Filamentous green alga).